Reading from the N-terminus, the 135-residue chain is Snaclec echicetin subunit alpha (135 aa).

The signal sequence occupies residues 1–4 (GADE). Disulfide bonds link cysteine 6/cysteine 17, cysteine 34/cysteine 129, and cysteine 104/cysteine 121. Residues 13 to 130 (NGVYCYMLFK…CENTFPFMCK (118 aa)) form the C-type lectin domain.

The protein belongs to the snaclec family. Heterodimer of subunits alpha and beta; disulfide-linked. In terms of tissue distribution, expressed by the venom gland.

The protein localises to the secreted. Its function is as follows. Binding of echicetin to GPIbalpha (GP1BA) receptor on platelets alone results in inhibition of platelet aggregation, while binding to both GP1BA receptor and IgMk promotes platelet aggregation and signal transduction. In Echis carinatus (Saw-scaled viper), this protein is Snaclec echicetin subunit alpha.